A 630-amino-acid polypeptide reads, in one-letter code: ATP synthase subunit alpha (630 aa).

Residue 173–180 (GDRQTGKT) coordinates ATP. A disordered region spans residues 592–630 (AGGASTAADEDGAGDDEEEAPAPKAKSKNAKSASKAKEK). Residues 599–611 (ADEDGAGDDEEEA) are compositionally biased toward acidic residues.

The protein belongs to the ATPase alpha/beta chains family. As to quaternary structure, F-type ATPases have 2 components, CF(1) - the catalytic core - and CF(0) - the membrane proton channel. CF(1) has five subunits: alpha(3), beta(3), gamma(1), delta(1), epsilon(1). CF(0) has three main subunits: a(1), b(2) and c(9-12). The alpha and beta chains form an alternating ring which encloses part of the gamma chain. CF(1) is attached to CF(0) by a central stalk formed by the gamma and epsilon chains, while a peripheral stalk is formed by the delta and b chains.

Its subcellular location is the cell inner membrane. It carries out the reaction ATP + H2O + 4 H(+)(in) = ADP + phosphate + 5 H(+)(out). In terms of biological role, produces ATP from ADP in the presence of a proton gradient across the membrane. The alpha chain is a regulatory subunit. The protein is ATP synthase subunit alpha of Sorangium cellulosum (strain So ce56) (Polyangium cellulosum (strain So ce56)).